A 904-amino-acid polypeptide reads, in one-letter code: MNSGEKQDNLQAWGQQPSSSYSNTQQQHGQITGQIPLTITNQVEAHDNDFHMQDASNDELEKSKKIAEQPTEHPQQHHQQQPAVPRFPPQSRQPQAILRFPQPPITSINKANNSNSQNFFPQQEVLQSRPKKHRVSMTNAEAANTPGMPPEKLPAKKLSADSQRPLFRDSNVFQRSAGQFTNDNGPSSSSAIVGAPFDANSSSKPVHIQQFRNPNDAPVTKLTSDLIKTYKAINEKFQSFYLRKNVRRSTVGRHTSLDSSGKPKTGKEASSSDANLIETFSIHNAVPNTSSSGNQPHYDSHVNAPPLLDTNAPPTSTMVVPMRTETESQQQMRQKSSRGGPYNNGYDDQNYDYILKNGEIFDKRYVILSDTPVGKGSFGQVTKAYDTVTKEEVAIKIIKNKKTFFDQAQIEIHLLELTNAHDKDNKYNIVTLKGHFVHRAHLCLVFELLSYNLYDLLKNTNFRGVSLNLARKFAQQLGKTLLFLSSPELSIIHCDLKPENVLLVNAKRSQIRVIDFGSSCQTGHRIYQYIQSRFYRSPEVLLGIAYDTKIDMWSLGCILVEMHTGEPLFAGSSEVDQMMKIVEVLGMPPKEMLDIGPKTHKYFDKTEDGIYYCKKTRDGYRHTYKAPGARKLHEILGVTSGGPGGRRLGEPGHSVEDYSKFKDLIKRMLNFDPKQRILRTTLFPVSHTAYNQNLYHQQQIDQVPAVGSVYIEDNGMYRPVPTSSHPISVTSSFDDGDVIEIDPNRRRYSQQNYHNPNYQYSQQPQSSSQQQQQQYQQSQRAQLEKQQQLQQQQQQQQQQRQHLSHQPSQSVQQHSSSSSRSRPRQQDQAEWRTQLELEEAFKQRKAEEATAPRSLQYNPQQVVGVQLIKRVLISKLFQGSMSHGNVNAGSSRDMEKHDYPNNKL.

Disordered regions lie at residues 1 to 151 (MNSG…MPPE), 250 to 272 (TVGR…ASSS), and 285 to 345 (AVPN…YNNG). A compositionally biased stretch (polar residues) spans 9-23 (NLQAWGQQPSSSYSN). The span at 24 to 35 (TQQQHGQITGQI) shows a compositional bias: low complexity. Positions 59–75 (ELEKSKKIAEQPTEHPQ) are enriched in basic and acidic residues. Over residues 112-123 (NNSNSQNFFPQQ) the composition is skewed to low complexity. The segment covering 286-297 (VPNTSSSGNQPH) has biased composition (polar residues). The Protein kinase domain occupies 367–690 (ILSDTPVGKG…TLFPVSHTAY (324 aa)). Residues 373 to 381 (VGKGSFGQV) and K396 contribute to the ATP site. D495 functions as the Proton acceptor in the catalytic mechanism. 2 disordered regions span residues 717–830 (YRPV…DQAE) and 881–904 (MSHG…NNKL). Polar residues predominate over residues 721 to 733 (PTSSHPISVTSSF). The segment covering 749–820 (SQQNYHNPNY…VQQHSSSSSR (72 aa)) has biased composition (low complexity). Positions 881–890 (MSHGNVNAGS) are enriched in polar residues. The span at 892–904 (RDMEKHDYPNNKL) shows a compositional bias: basic and acidic residues.

Belongs to the protein kinase superfamily. CMGC Ser/Thr protein kinase family. MNB/DYRK subfamily. The cofactor is Mg(2+).

It localises to the nucleus. It carries out the reaction L-seryl-[protein] + ATP = O-phospho-L-seryl-[protein] + ADP + H(+). The catalysed reaction is L-threonyl-[protein] + ATP = O-phospho-L-threonyl-[protein] + ADP + H(+). It catalyses the reaction L-tyrosyl-[protein] + ATP = O-phospho-L-tyrosyl-[protein] + ADP + H(+). Possible role in the function of olfactory neurons. The polypeptide is Dual specificity tyrosine-phosphorylation-regulated kinase mbk-1 (Caenorhabditis briggsae).